A 344-amino-acid polypeptide reads, in one-letter code: Methionine import ATP-binding protein MetN (344 aa).

Residues 2–241 enclose the ABC transporter domain; sequence IEINRVNKVF…PKTELARKFI (240 aa). Residue 38–45 participates in ATP binding; that stretch reads GSSGAGKS.

Belongs to the ABC transporter superfamily. Methionine importer (TC 3.A.1.24) family. As to quaternary structure, the complex is composed of two ATP-binding proteins (MetN), two transmembrane proteins (MetI) and a solute-binding protein (MetQ).

The protein localises to the cell inner membrane. The enzyme catalyses L-methionine(out) + ATP + H2O = L-methionine(in) + ADP + phosphate + H(+). The catalysed reaction is D-methionine(out) + ATP + H2O = D-methionine(in) + ADP + phosphate + H(+). In terms of biological role, part of the ABC transporter complex MetNIQ involved in methionine import. Responsible for energy coupling to the transport system. The protein is Methionine import ATP-binding protein MetN of Photobacterium profundum (strain SS9).